The chain runs to 257 residues: Phosphonates import ATP-binding protein PhnC (257 aa).

An ABC transporter domain is found at 2–246 (IEFRNVSKVY…KFAEIYGDVV (245 aa)). 35 to 42 (GLSGAGKS) lines the ATP pocket.

Belongs to the ABC transporter superfamily. Phosphonates importer (TC 3.A.1.9.1) family. In terms of assembly, the complex is composed of two ATP-binding proteins (PhnC), two transmembrane proteins (PhnE) and a solute-binding protein (PhnD).

It is found in the cell membrane. The catalysed reaction is phosphonate(out) + ATP + H2O = phosphonate(in) + ADP + phosphate + H(+). Functionally, part of the ABC transporter complex PhnCDE involved in phosphonates import. Responsible for energy coupling to the transport system. The polypeptide is Phosphonates import ATP-binding protein PhnC (Bacillus anthracis).